The chain runs to 492 residues: Bifunctional purine biosynthesis protein PurH (492 aa).

In terms of domain architecture, MGS-like spans Met-1–Val-144.

The protein belongs to the PurH family.

The enzyme catalyses (6R)-10-formyltetrahydrofolate + 5-amino-1-(5-phospho-beta-D-ribosyl)imidazole-4-carboxamide = 5-formamido-1-(5-phospho-D-ribosyl)imidazole-4-carboxamide + (6S)-5,6,7,8-tetrahydrofolate. The catalysed reaction is IMP + H2O = 5-formamido-1-(5-phospho-D-ribosyl)imidazole-4-carboxamide. The protein operates within purine metabolism; IMP biosynthesis via de novo pathway; 5-formamido-1-(5-phospho-D-ribosyl)imidazole-4-carboxamide from 5-amino-1-(5-phospho-D-ribosyl)imidazole-4-carboxamide (10-formyl THF route): step 1/1. It functions in the pathway purine metabolism; IMP biosynthesis via de novo pathway; IMP from 5-formamido-1-(5-phospho-D-ribosyl)imidazole-4-carboxamide: step 1/1. This is Bifunctional purine biosynthesis protein PurH from Staphylococcus carnosus (strain TM300).